Reading from the N-terminus, the 307-residue chain is Thymidylate synthase (307 aa).

Position 44 (R44) interacts with dUMP. Residue S108 is modified to Phosphoserine. DUMP is bound by residues 169–170 (RR), 189–190 (CH), 209–212 (RSGD), N220, and 250–252 (HIY). C189 (nucleophile) is an active-site residue. D212 lines the (6R)-5,10-methylene-5,6,7,8-tetrahydrofolate pocket. Glycyl lysine isopeptide (Lys-Gly) (interchain with G-Cter in SUMO2) cross-links involve residues K286 and K302. Residue A306 coordinates (6R)-5,10-methylene-5,6,7,8-tetrahydrofolate.

This sequence belongs to the thymidylate synthase family. Homodimer.

It localises to the nucleus. Its subcellular location is the cytoplasm. The protein localises to the mitochondrion. The protein resides in the mitochondrion matrix. It is found in the mitochondrion inner membrane. The catalysed reaction is dUMP + (6R)-5,10-methylene-5,6,7,8-tetrahydrofolate = 7,8-dihydrofolate + dTMP. Its pathway is pyrimidine metabolism; dTTP biosynthesis. In terms of biological role, catalyzes the reductive methylation of 2'-deoxyuridine 5'-monophosphate (dUMP) to thymidine 5'-monophosphate (dTMP), using the cosubstrate, 5,10- methylenetetrahydrofolate (CH2H4folate) as a 1-carbon donor and reductant and contributes to the de novo mitochondrial thymidylate biosynthesis pathway. This is Thymidylate synthase (Tyms) from Mus musculus (Mouse).